A 191-amino-acid chain; its full sequence is Cell division protein SepF (191 aa).

The tract at residues 1 to 77 is disordered; the sequence is MEGQDDYQLL…MGSNVIGLPG (77 aa).

This sequence belongs to the SepF family. As to quaternary structure, homodimer. Interacts with FtsZ.

The protein resides in the cytoplasm. Functionally, cell division protein that is part of the divisome complex and is recruited early to the Z-ring. Probably stimulates Z-ring formation, perhaps through the cross-linking of FtsZ protofilaments. Its function overlaps with FtsA. This is Cell division protein SepF from Synechococcus sp. (strain JA-2-3B'a(2-13)) (Cyanobacteria bacterium Yellowstone B-Prime).